Consider the following 291-residue polypeptide: N-acetylmannosamine kinase (291 aa).

ATP is bound by residues 5-12 (AIDIGGTK) and 132-139 (GVGGGVVC). Residues His156, Cys166, Cys168, and Cys173 each coordinate Zn(2+).

Belongs to the ROK (NagC/XylR) family. NanK subfamily. In terms of assembly, homodimer.

It catalyses the reaction an N-acyl-D-mannosamine + ATP = an N-acyl-D-mannosamine 6-phosphate + ADP + H(+). It participates in amino-sugar metabolism; N-acetylneuraminate degradation; D-fructose 6-phosphate from N-acetylneuraminate: step 2/5. Its function is as follows. Catalyzes the phosphorylation of N-acetylmannosamine (ManNAc) to ManNAc-6-P. The chain is N-acetylmannosamine kinase from Salmonella arizonae (strain ATCC BAA-731 / CDC346-86 / RSK2980).